A 128-amino-acid polypeptide reads, in one-letter code: uncharacterized protein (128 aa).

3 helical membrane passes run 13–35, 42–64, and 90–112; these read FQMA…VFFV, IIAL…YNGG, and LVLT…SIIL.

It is found in the cell membrane. This is an uncharacterized protein from Methanocaldococcus jannaschii (strain ATCC 43067 / DSM 2661 / JAL-1 / JCM 10045 / NBRC 100440) (Methanococcus jannaschii).